Consider the following 293-residue polypeptide: Formamidopyrimidine-DNA glycosylase (293 aa).

Pro2 (schiff-base intermediate with DNA) is an active-site residue. Glu3 acts as the Proton donor in catalysis. Lys58 acts as the Proton donor; for beta-elimination activity in catalysis. Residues His104, Arg123, and Arg166 each contribute to the DNA site. The FPG-type zinc-finger motif lies at 257–293 (AVYDREGEPCRSKGCDGVVKRFVQNGRSTFWCPKCQK). Arg283 (proton donor; for delta-elimination activity) is an active-site residue.

The protein belongs to the FPG family. Monomer. Requires Zn(2+) as cofactor.

It carries out the reaction Hydrolysis of DNA containing ring-opened 7-methylguanine residues, releasing 2,6-diamino-4-hydroxy-5-(N-methyl)formamidopyrimidine.. It catalyses the reaction 2'-deoxyribonucleotide-(2'-deoxyribose 5'-phosphate)-2'-deoxyribonucleotide-DNA = a 3'-end 2'-deoxyribonucleotide-(2,3-dehydro-2,3-deoxyribose 5'-phosphate)-DNA + a 5'-end 5'-phospho-2'-deoxyribonucleoside-DNA + H(+). Involved in base excision repair of DNA damaged by oxidation or by mutagenic agents. Acts as a DNA glycosylase that recognizes and removes damaged bases. Has a preference for oxidized purines, such as 7,8-dihydro-8-oxoguanine (8-oxoG). Has AP (apurinic/apyrimidinic) lyase activity and introduces nicks in the DNA strand. Cleaves the DNA backbone by beta-delta elimination to generate a single-strand break at the site of the removed base with both 3'- and 5'-phosphates. The chain is Formamidopyrimidine-DNA glycosylase from Rhodopseudomonas palustris (strain BisB18).